We begin with the raw amino-acid sequence, 399 residues long: CCA-adding enzyme (399 aa).

The ATP site is built by Gly33 and Arg36. CTP is bound by residues Gly33 and Arg36. Asp46 and Asp48 together coordinate Mg(2+). The ATP site is built by Arg117, Asp160, Arg163, Arg166, and Arg169. Arg117, Asp160, Arg163, Arg166, and Arg169 together coordinate CTP.

It belongs to the tRNA nucleotidyltransferase/poly(A) polymerase family. Bacterial CCA-adding enzyme type 3 subfamily. Homodimer. Mg(2+) serves as cofactor.

The catalysed reaction is a tRNA precursor + 2 CTP + ATP = a tRNA with a 3' CCA end + 3 diphosphate. The enzyme catalyses a tRNA with a 3' CCA end + 2 CTP + ATP = a tRNA with a 3' CCACCA end + 3 diphosphate. Catalyzes the addition and repair of the essential 3'-terminal CCA sequence in tRNAs without using a nucleic acid template. Adds these three nucleotides in the order of C, C, and A to the tRNA nucleotide-73, using CTP and ATP as substrates and producing inorganic pyrophosphate. tRNA 3'-terminal CCA addition is required both for tRNA processing and repair. Also involved in tRNA surveillance by mediating tandem CCA addition to generate a CCACCA at the 3' terminus of unstable tRNAs. While stable tRNAs receive only 3'-terminal CCA, unstable tRNAs are marked with CCACCA and rapidly degraded. In Lactobacillus helveticus (strain DPC 4571), this protein is CCA-adding enzyme.